Consider the following 135-residue polypeptide: Holo-[acyl-carrier-protein] synthase (135 aa).

Asp9 and Glu63 together coordinate Mg(2+).

The protein belongs to the P-Pant transferase superfamily. AcpS family. Mg(2+) is required as a cofactor.

The protein resides in the cytoplasm. It carries out the reaction apo-[ACP] + CoA = holo-[ACP] + adenosine 3',5'-bisphosphate + H(+). Functionally, transfers the 4'-phosphopantetheine moiety from coenzyme A to a Ser of acyl-carrier-protein. This Paraburkholderia phymatum (strain DSM 17167 / CIP 108236 / LMG 21445 / STM815) (Burkholderia phymatum) protein is Holo-[acyl-carrier-protein] synthase.